Consider the following 302-residue polypeptide: Tegument protein VP22 (302 aa).

Residues 1–10 are compositionally biased toward basic and acidic residues; sequence MASSDGDRLC. Disordered regions lie at residues 1 to 42 and 125 to 167; these read MASS…PDDS and SFTK…TATS. Residues 154–244 are interaction with gE; sequence RPISFSTAPK…ANEADLGEGA (91 aa). Positions 157 to 167 are enriched in polar residues; it reads SFSTAPKTATS. The short motif at 212 to 224 is the Nuclear export signal element; sequence LDRLLTGAVIRIT. Residues 243 to 302 form a disordered region; it reads GASVSKRGHNRKTGDLQGGMGNEPMYAQVRKPKSRTDTQTTGRITNRSRARSASRTDARK.

Belongs to the alphaherpesvirinae VP22 tegument protein family. In terms of assembly, interacts with gE (via C-terminus); this interaction is necessary for the recruitment of VP22/ORF9 to the Golgi and its packaging into virions. Interacts with gM (via C-terminus). Interacts with VP16/ORF10; this interaction allows the formation of a tripartite complex composed of VP16/ORF10, VP22/ORF9 and VHS/ORF17. Interacts with the capsid-binding protein ORF44. Interacts with host CGAS. Highly phosphorylated in the host cell. Packaging is selective for underphosphorylated forms.

It is found in the virion tegument. It localises to the host cytoplasm. The protein localises to the host nucleus. Its subcellular location is the host Golgi apparatus. Its function is as follows. Tegument protein that plays different roles during the time course of infection. Participates in both the accumulation of viral mRNAs and viral protein translation at late time of infection. Modulates the RNase activity of the virion host shutoff protein ORF17 probably to ensure necessary levels of key cellular mRNAs and proteins. Plays a role in microtubule reorganization that occurs after viral infection by stabilizing microtubule network. Plays a role in the inhibition of host innate immune system by targeting the CGAS enzymatic activity which is the principal cytosolic DNA sensor that detects invading viral DNA. Acts by mediating disruption of liquid-like droplets in which CGAS is activated, thereby preventing CGAS activity. This Varicella-zoster virus (strain Oka vaccine) (HHV-3) protein is Tegument protein VP22.